The primary structure comprises 261 residues: Imidazole glycerol phosphate synthase subunit HisF (261 aa).

Active-site residues include D16 and D135.

This sequence belongs to the HisA/HisF family. In terms of assembly, heterodimer of HisH and HisF.

It localises to the cytoplasm. It catalyses the reaction 5-[(5-phospho-1-deoxy-D-ribulos-1-ylimino)methylamino]-1-(5-phospho-beta-D-ribosyl)imidazole-4-carboxamide + L-glutamine = D-erythro-1-(imidazol-4-yl)glycerol 3-phosphate + 5-amino-1-(5-phospho-beta-D-ribosyl)imidazole-4-carboxamide + L-glutamate + H(+). Its pathway is amino-acid biosynthesis; L-histidine biosynthesis; L-histidine from 5-phospho-alpha-D-ribose 1-diphosphate: step 5/9. Its function is as follows. IGPS catalyzes the conversion of PRFAR and glutamine to IGP, AICAR and glutamate. The HisF subunit catalyzes the cyclization activity that produces IGP and AICAR from PRFAR using the ammonia provided by the HisH subunit. The protein is Imidazole glycerol phosphate synthase subunit HisF of Mycobacterium leprae (strain Br4923).